The primary structure comprises 229 residues: Large ribosomal subunit protein uL1 (229 aa).

This sequence belongs to the universal ribosomal protein uL1 family. Part of the 50S ribosomal subunit.

Binds directly to 23S rRNA. The L1 stalk is quite mobile in the ribosome, and is involved in E site tRNA release. Functionally, protein L1 is also a translational repressor protein, it controls the translation of the L11 operon by binding to its mRNA. In Clostridium botulinum (strain Loch Maree / Type A3), this protein is Large ribosomal subunit protein uL1.